Here is a 599-residue protein sequence, read N- to C-terminus: MRIDQSIINEIKDKTDILDLVSEYVKLEKRGRNYIGLCPFHDEKTPSFTVSEDKQICHCFGCKKGGNVFQFTQEIKDISFVEAVKELGDRVNVAVDIEATQSNSNVQIASDDLQMIEMHELIQEFYYYALTKTVEGEQALTYLQERGFTDALIKERGIGFAPDSSHFCHDFLQKKGYDIELAYEAGLLSRNEENFSYYDRFRNRIMFPLKNAQGRIVGYSGRTYTGQEPKYLNSPETPIFQKRKLLYNLDKARKSIRKLDEIVLLEGFMDVIKSDTAGLKNVVATMGTQLSDEHITFIRKLTSNITLMFDGDFAGSEATLKTGQNLLQQGLNVFVIQLPSGMDPDEYIGKYGNDAFTAFVKNDKKSFAHYKVSILKDEIAHNDLSYERYLKELSHDISLMKSSILQQKALNDVAPFFNVSPEQLANEIQFNQAPANYYPEDEYGGYIEPEPIGMAQFDNLSRQEKAERAFLKHLMRDKDTFLNYYESVDKDNFTNQHFKYVFEVLHDFYAENDQYNISDAVQYVNSNELRETLISLEQYNLNDEPYENEIDDYVNVINEKGQETIESLNHKLREATRIGDVELQKYYLQQIVAKNKERM.

The CHC2-type zinc finger occupies 38-62 (CPFHDEKTPSFTVSEDKQICHCFGC). In terms of domain architecture, Toprim spans 260 to 341 (DEIVLLEGFM…NVFVIQLPSG (82 aa)). Mg(2+) contacts are provided by Glu-266, Asp-310, and Asp-312.

Belongs to the DnaG primase family. Monomer. Interacts with DnaB. It depends on Zn(2+) as a cofactor. Mg(2+) serves as cofactor.

The catalysed reaction is ssDNA + n NTP = ssDNA/pppN(pN)n-1 hybrid + (n-1) diphosphate.. Functionally, RNA polymerase that catalyzes the synthesis of short RNA molecules used as primers for DNA polymerase during DNA replication. This is DNA primase from Staphylococcus aureus (strain COL).